A 524-amino-acid chain; its full sequence is MSAAPLDYKKALEHLKTYSSKDGLSVQELMDSTTRGGLTYNDFLVLPGLVNFPSSAVSLQTKLTKKITLNTPFVSSPMDTVTEADMAIYMALLGGIGFIHHNCTPKEQASMVKKVKMFENGFINSPIVISPTTTVGEVKVMKRKFGFSGFPVTEDGKCPGKLVGLVTSRDIQFLEDDSLVVSEVMTKNPVTGIKGITLKEGNEILKQTKKGKLLIVDDNGNLVSMLSRADLMKNQNYPLASKSATTKQLLCGAAIGTIEADKERLRLLVEAGLDVVILDSSQGNSVFQLNMIKWIKETFPDLEIIAGNVATREQAANLIAAGADGLRIGMGSGSICITQEVMACGRPQGTAVYNVCQFANQFGVPCMADGGVQNIGHITKALALGSSTVMMGGMLAGTTESPGEYFYKDGKRLKAYRGMGSIDAMQKTGNKGNASTSRYFSESDSVLVAQGVSGAVVDKGSIKKFIPYLYNGLQHSCQDIGCESLTSLKENVQNGEVRFEFRTASAQLEGGVHNLHSYEKRLYN.

2 CBS domains span residues 122-183 and 185-241; these read FINS…VVSE and MTKN…PLAS. S125 carries the post-translational modification Phosphoserine. NAD(+)-binding positions include 279 to 281 and 329 to 331; these read DSS and GMG. Positions 331 and 333 each coordinate K(+). IMP is bound at residue S334. K(+) is bound at residue C336. The active-site Thioimidate intermediate is the C336. IMP-binding positions include 369-371, 392-393, and 416-420; these read DGG, GG, and YRGMG. The Proton acceptor role is filled by R438. Q450 is a binding site for IMP. The K(+) site is built by E509, G510, and G511.

Belongs to the IMPDH/GMPR family. In terms of assembly, homotetramer. Seems to be able to form heterotetramers composed from more than 1 of the 3 IMPDH gene products (IMD2-4). K(+) is required as a cofactor.

It is found in the cytoplasm. The enzyme catalyses IMP + NAD(+) + H2O = XMP + NADH + H(+). Its pathway is purine metabolism; XMP biosynthesis via de novo pathway; XMP from IMP: step 1/1. Its activity is regulated as follows. Mycophenolic acid (MPA) is a non-competitive inhibitor that prevents formation of the closed enzyme conformation by binding to the same site as the amobile flap. In contrast, mizoribine monophosphate (MZP) is a competitive inhibitor that induces the closed conformation. MPA is a potent inhibitor of mammalian IMPDHs but a poor inhibitor of the bacterial enzymes. MZP is a more potent inhibitor of bacterial IMPDH. Functionally, catalyzes the conversion of inosine 5'-phosphate (IMP) to xanthosine 5'-phosphate (XMP), the first committed and rate-limiting step in the de novo synthesis of guanine nucleotides, and therefore plays an important role in the regulation of cell growth. This is Inosine-5'-monophosphate dehydrogenase 4 from Saccharomyces cerevisiae (strain ATCC 204508 / S288c) (Baker's yeast).